A 470-amino-acid polypeptide reads, in one-letter code: Nuclear receptor ROR-beta (470 aa).

Positions 18–93 (VIPCKICGDK…LGMSRDAVKF (76 aa)) form a DNA-binding region, nuclear receptor. 2 NR C4-type zinc fingers span residues 21-41 (CKIC…CEGC) and 57-81 (CPRQ…LQKC). The segment covering 104-117 (LYAEVQKHQQRLQE) has biased composition (basic and acidic residues). The interval 104-127 (LYAEVQKHQQRLQEQRQQQSGEAE) is disordered. Residues 222-460 (EIDRIAQNII…TLFPPLYKEL (239 aa)) enclose the NR LBD domain. An AF-2 motif is present at residues 456–461 (LYKELF).

It belongs to the nuclear hormone receptor family. NR1 subfamily. In terms of assembly, monomer. Interacts with CRX. In terms of tissue distribution, expressed in inner and outer neuroblastic layer as well as in the ganglion cell layer of the developing retina. Expressed in bone marrow osteoprogenitor cells.

Its subcellular location is the nucleus. It localises to the nucleoplasm. Nuclear receptor that binds DNA as a monomer to ROR response elements (RORE) containing a single core motif half-site 5'-AGGTCA-3' preceded by a short A-T-rich sequence. Considered to have intrinsic transcriptional activity, have some natural ligands such as all-trans retinoic acid (ATRA) and other retinoids which act as inverse agonists repressing the transcriptional activity. Required for normal postnatal development of rod and cone photoreceptor cells. Modulates rod photoreceptors differentiation at least by inducing the transcription factor NRL-mediated pathway. In cone photoreceptor cells, regulates transcription of OPN1SW. Involved in the regulation of the period length and stability of the circadian rhythm. May control cytoarchitectural patterning of neocortical neurons during development. May act in a dose-dependent manner to regulate barrel formation upon innervation of layer IV neurons by thalamocortical axons. May play a role in the suppression of osteoblastic differentiation through the inhibition of RUNX2 transcriptional activity. In terms of biological role, isoform 1 is critical for hindlimb motor control and for the differentiation of amacrine and horizontal cells in the retina. Regulates the expression of PTF1A synergistically with FOXN4. This Mus musculus (Mouse) protein is Nuclear receptor ROR-beta (Rorb).